We begin with the raw amino-acid sequence, 660 residues long: F-box/LRR-repeat protein 5 (660 aa).

The segment at 1–157 (MAPFPDEVDL…IKKKVIAQHC (157 aa)) is hemerythrin-like. Fe(3+)-binding residues include H15, H57, E58, E61, H80, H124, and E127. An F-box domain is found at 200 to 246 (SASICNLPPEVMLNIFSYLNPQDLCRCSQVNTKWAQLARTGSLWRHL). The disordered stretch occupies residues 283–305 (YQEWDEDADIDESEETGEDDPSI). A compositionally biased stretch (acidic residues) spans 285–303 (EWDEDADIDESEETGEDDP). LRR repeat units follow at residues 311–337 (EKELLNSLVHYILPYIGHSVKTLVLAY), 338–362 (SSATSNKVIRQILEYCPNMEHLDLT), 363–389 (QTDISDSAFNGWCFGACQTLRHIDLSG), 390–417 (CEKITDSALEKLSVALGMPLAHKKRLLK), 551–576 (IRDICPGSAKLDQQVARVLQFLSLSG), 577–604 (CHQITDHGLRVLTIGGGLPNLEHLNLSG), 605–630 (CLNVTGSGLQDLVSACPSLNDEHFYY), and 631–649 (CDNISGPHAATASGCQNLQ). 4 residues coordinate [2Fe-2S] cluster: C631, C645, C655, and C656.

As to quaternary structure, part of a SCF (SKP1-cullin-F-box) protein ligase complex. Requires [2Fe-2S] cluster as cofactor. In terms of processing, ubiquitinated upon iron and oxygen depletion, leading to its degradation by the proteasome. Ubiquitination is regulated by the hemerythrin-like region that acts as an oxygen and iron sensor.

The protein localises to the cytoplasm. It localises to the perinuclear region. It is found in the nucleus. It participates in protein modification; protein ubiquitination. Its function is as follows. Component of some SCF (SKP1-cullin-F-box) protein ligase complex that plays a central role in iron homeostasis by promoting the ubiquitination and subsequent degradation of ireb2/irp2. Upon high iron and oxygen level, it specifically recognizes and binds ireb2/irp2, promoting its ubiquitination and degradation by the proteasome. The polypeptide is F-box/LRR-repeat protein 5 (fbxl5) (Xenopus tropicalis (Western clawed frog)).